Reading from the N-terminus, the 287-residue chain is MNLITLLVLGVSTCLIYGIEADEKTSSALENEIVEILNGNFKNEKKSIETSDQWLKGRFGREVNQWLKGRFGRELSDQWLKGRFGRELSDQWLKGRFGREVLDQWLKGRFGRDASNQWLKGRFGRELSDQWLKGRFGREGSNQWLKGRFGREASKNDLEKQNGRGDSDQWLKGRFGREARKQLLGGRFGRKDMNQLLAERHGRETSDQWLKGRFGRQLSDQWLKGRFGREVKNDKNNPFRSRYTGDSTQLQRENNQPIEELRDNTEKVSIENKPIMKKTSVKISKTV.

The signal sequence occupies residues 1-21 (MNLITLLVLGVSTCLIYGIEA). The propeptide occupies 22-52 (DEKTSSALENEIVEILNGNFKNEKKSIETSD). Glutamine 53 carries the post-translational modification Pyrrolidone carboxylic acid. Position 59 is a phenylalanine amide (phenylalanine 59). Positions 62 to 64 (EVN) are excised as a propeptide. The residue at position 65 (glutamine 65) is a Pyrrolidone carboxylic acid. At phenylalanine 71 the chain carries Phenylalanine amide. Positions 74 to 77 (ELSD) are excised as a propeptide. Pyrrolidone carboxylic acid is present on glutamine 78. Phenylalanine 84 is subject to Phenylalanine amide. Positions 87–90 (ELSD) are excised as a propeptide. Pyrrolidone carboxylic acid is present on glutamine 91. Phenylalanine 97 carries the post-translational modification Phenylalanine amide. The propeptide occupies 100 to 103 (EVLD). Pyrrolidone carboxylic acid is present on glutamine 104. Phenylalanine 110 carries the post-translational modification Phenylalanine amide. Positions 113–116 (DASN) are excised as a propeptide. Glutamine 117 is modified (pyrrolidone carboxylic acid). Phenylalanine amide is present on phenylalanine 123. A propeptide spanning residues 126 to 129 (ELSD) is cleaved from the precursor. Glutamine 130 is modified (pyrrolidone carboxylic acid). Phenylalanine 136 is subject to Phenylalanine amide. Residues 139 to 142 (EGSN) constitute a propeptide that is removed on maturation. Glutamine 143 is modified (pyrrolidone carboxylic acid). A Phenylalanine amide modification is found at phenylalanine 149. Residues 152–168 (EASKNDLEKQNGRGDSD) constitute a propeptide that is removed on maturation. Pyrrolidone carboxylic acid is present on glutamine 169. The residue at position 175 (phenylalanine 175) is a Phenylalanine amide. The propeptide occupies 178 to 181 (EARK). Glutamine 182 bears the Pyrrolidone carboxylic acid mark. Residue phenylalanine 188 is modified to Phenylalanine amide. A propeptide spanning residues 192-194 (DMN) is cleaved from the precursor. Pyrrolidone carboxylic acid is present on glutamine 195. Histidine 201 bears the Histidine amide mark. Positions 204-207 (ETSD) are excised as a propeptide. The residue at position 208 (glutamine 208) is a Pyrrolidone carboxylic acid. Phenylalanine 214 is modified (phenylalanine amide). Residues 217 to 220 (QLSD) constitute a propeptide that is removed on maturation. Pyrrolidone carboxylic acid is present on glutamine 221. Phenylalanine 227 carries the phenylalanine amide modification. Residues 229 to 267 (REVKNDKNNPFRSRYTGDSTQLQRENNQPIEELRDNTEK) form a disordered region. Residues 230–287 (EVKNDKNNPFRSRYTGDSTQLQRENNQPIEELRDNTEKVSIENKPIMKKTSVKISKTV) constitute a propeptide that is removed on maturation. Over residues 238-257 (PFRSRYTGDSTQLQRENNQP) the composition is skewed to polar residues.

It belongs to the FARP (FMRFamide related peptide) family. The N-terminal processing sites of the Pol-RFamide peptides are acidic suggesting that cniderian nervous systems may use a variety of unconventional processing procedures.

It localises to the secreted. Its function is as follows. Has direct action on motoneurons, and effect includes transient inhibition followed by prolonged excitation. The sequence is that of Pol-RFamide neuropeptides from Polyorchis penicillatus (Hydromedusa).